A 306-amino-acid chain; its full sequence is Agmatinase (306 aa).

Mn(2+)-binding residues include His-126, Asp-149, His-151, Asp-153, Asp-230, and Asp-232.

Belongs to the arginase family. Agmatinase subfamily. The cofactor is Mn(2+).

It carries out the reaction agmatine + H2O = urea + putrescine. Its pathway is amine and polyamine biosynthesis; putrescine biosynthesis via agmatine pathway; putrescine from agmatine: step 1/1. In terms of biological role, catalyzes the formation of putrescine from agmatine. This is Agmatinase from Enterobacter sp. (strain 638).